A 504-amino-acid polypeptide reads, in one-letter code: Aspartyl/glutamyl-tRNA(Asn/Gln) amidotransferase subunit B (504 aa).

Belongs to the GatB/GatE family. GatB subfamily. As to quaternary structure, heterotrimer of A, B and C subunits.

The catalysed reaction is L-glutamyl-tRNA(Gln) + L-glutamine + ATP + H2O = L-glutaminyl-tRNA(Gln) + L-glutamate + ADP + phosphate + H(+). It catalyses the reaction L-aspartyl-tRNA(Asn) + L-glutamine + ATP + H2O = L-asparaginyl-tRNA(Asn) + L-glutamate + ADP + phosphate + 2 H(+). In terms of biological role, allows the formation of correctly charged Asn-tRNA(Asn) or Gln-tRNA(Gln) through the transamidation of misacylated Asp-tRNA(Asn) or Glu-tRNA(Gln) in organisms which lack either or both of asparaginyl-tRNA or glutaminyl-tRNA synthetases. The reaction takes place in the presence of glutamine and ATP through an activated phospho-Asp-tRNA(Asn) or phospho-Glu-tRNA(Gln). The protein is Aspartyl/glutamyl-tRNA(Asn/Gln) amidotransferase subunit B of Tropheryma whipplei (strain TW08/27) (Whipple's bacillus).